The primary structure comprises 599 residues: Subtilisin-like protease 1 (599 aa).

The N-terminal stretch at 1-20 (MRTVFIYACIISLVLRTIPA) is a signal peptide. The propeptide at 21–195 (HNDLMSKEKE…VESDELVGAD (175 aa)) is inhibition peptide. N-linked (GlcNAc...) asparagine glycosylation occurs at Asn57. Residues 74–101 (EDAPKEELNKIEMEKKKAEEEAKNSKKK) adopt a coiled-coil conformation. Ca(2+)-binding residues include Asn123, Thr126, Pro128, and Gly183. N-linked (GlcNAc...) asparagine glycosylation is present at Asn227. Asp251 lines the Ca(2+) pocket. Positions 257 to 574 (QWGLDLARLD…GGYIDILNAV (318 aa)) constitute a Peptidase S8 domain. 2 disulfide bridges follow: Cys283/Cys393 and Cys372/Cys389. Asp286 (charge relay system) is an active-site residue. Residues Asp295, Glu306, Asp314, Asp315, Asp316, Asn318, Ile320, Asp322, and Asp323 each contribute to the Ca(2+) site. The N-linked (GlcNAc...) asparagine glycan is linked to Asn331. His342 acts as the Charge relay system in catalysis. Ile353 is a Ca(2+) binding site. The N-linked (GlcNAc...) asparagine glycan is linked to Asn355. 3 residues coordinate Ca(2+): Asn356, Ile358, and Val360. N-linked (GlcNAc...) asparagine glycans are attached at residues Asn402 and Asn434. A disulfide bridge links Cys435 with Cys448. Ser519 functions as the Charge relay system in the catalytic mechanism.

Belongs to the peptidase S8 family. In terms of processing, the N-terminal prodomain is cleaved.

The protein resides in the secreted. It localises to the parasitophorous vacuole lumen. It is found in the cytoplasmic vesicle. Its subcellular location is the secretory vesicle. The enzyme catalyses Hydrolysis of proteins with broad specificity for peptide bonds, and a preference for a large uncharged residue in P1. Hydrolyzes peptide amides.. Functionally, mediates the proteolytic maturation of serine protease SERA3. Mediates the proteolytic maturation of MSP1, and thereby may prime the parasite cell surface for invasion of fresh erythrocytes. Required for completion of the parasite pre-erythrocytic stages. Required for hepatic schizont development and merozoite formation. Required for the egress of the hepatic merozoites from the parasitophorous vacuole. Required for parasite infectivity during blood stages. Required for male gamete egress. The polypeptide is Subtilisin-like protease 1 (Plasmodium berghei (strain Anka)).